Consider the following 1592-residue polypeptide: Serine/threonine-protein kinase mrck-1 (1592 aa).

Residues 1 to 954 (MAEPPPDDSA…IFSPVSISAM (954 aa)) are involved in homo-dimerization. One can recognise a Protein kinase domain in the interval 83-351 (FEVLKVIGKG…LSDFQLHPFF (269 aa)). ATP contacts are provided by residues 89-97 (IGKGAFGEV) and Lys-112. Asp-207 serves as the catalytic Proton acceptor. The AGC-kinase C-terminal domain maps to 352–426 (EGIDWNTIRD…THGSLLSDAR (75 aa)). A Phosphoserine modification is found at Ser-415. Tyr-416 is modified (phosphotyrosine). Coiled coils occupy residues 444-782 (ELME…KNNS) and 811-871 (LDLQ…IENS). Positions 782–796 (SPLTTSNYIQNTPSG) are enriched in polar residues. The tract at residues 782–801 (SPLTTSNYIQNTPSGWGSRR) is disordered. Residues 955-1534 (ERGHNFERMK…FRTIGKDDRS (580 aa)) are involved in binding to membranes, with a preference for di-phosphorylated phosphoinositides (PIPs). The Phorbol-ester/DAG-type zinc-finger motif lies at 957 to 1007 (GHNFERMKIKTPTKCGHCTSILIGLDRQGLFCQSCQYACHVSCAERVSQSC). 8 residues coordinate Zn(2+): His-958, Cys-971, Cys-974, Cys-988, Cys-991, His-996, Cys-999, and Cys-1007. One can recognise a PH domain in the interval 1026-1154 (GTAYEGLVKT…WVVALSELKT (129 aa)). The region spanning 1181–1479 (IRVAQCCAII…KPLSGDGILS (299 aa)) is the CNH domain. Residues 1544–1557 (ISTPSDFMHIVHMG) enclose the CRIB domain. The interval 1544 to 1557 (ISTPSDFMHIVHMG) is involved in interaction with cdc-42 (GTP-bound). Deletion prevents rescue of a null mutant; furthermore deleted form of mrck-1 is no longer recruited to the cell cortex and instead appears to be completely cytoplasmic.

It belongs to the protein kinase superfamily. AGC Ser/Thr protein kinase family. DMPK subfamily. In terms of assembly, homodimer, via N-terminal domains. Interacts (via the CRIB domain) with cdc-42 (GTP-bound), but with a lower affinity for cdc-42 bound to GDP; the interaction is direct and may play a role in the recruitment of mrck-1 to the apical membrane. Requires Mg(2+) as cofactor. Expressed in embryonic and L4 larval seam cells and in embryonic dorsal and ventral epidermal cells. Also expressed in the pharynx throughout development and in sublateral nerve cords in the L4 larva.

It is found in the cytoplasm. It localises to the cell cortex. It carries out the reaction L-seryl-[protein] + ATP = O-phospho-L-seryl-[protein] + ADP + H(+). The enzyme catalyses L-threonyl-[protein] + ATP = O-phospho-L-threonyl-[protein] + ADP + H(+). Functionally, serine/threonine-protein kinase. Involved in regulating endoderm precursor cell movements during early gastrulation; activates apical myosin and thereby increases actomyosin contractility and tension in the apical cell cortex, probably as a result of recruitment of mrck-1 to the cortex by a combination of interaction with active cdc-42 and membrane binding. May phosphorylate and inactivate the phosphatase mel-11, and thereby contribute to the regulation of myosin II contractility during embryonic elongation. Involved in controlling canal length and Golgi/ER integrity during excretory canal elongation. The sequence is that of Serine/threonine-protein kinase mrck-1 from Caenorhabditis elegans.